We begin with the raw amino-acid sequence, 404 residues long: MTYKIMAINAGSSSLKFQLLNMPQGALLCQGLIERIGLPEARFTLKTSAQKWQETLPIADHHEAVTLLLEALTGRGILSSLQEIDGVGHRVAHGGERFKDAALVCDDTLREIERLAELAPLHNPVNALGIRLFRQLLPAVPAVAVFDTAFHQTLAPEAWLYPLPWRYYAELGIRRYGFHGTSHHYVSSALAEKLGVPLSALRVVSCHLGNGCSVCAIKGGQSVNTSMGFTPQSGVMMGTRSGDLDPSILPWLVEKEGKSAQQLSQLLNNESGLLGVSGVSSDYRDVEQAADAGNERAALALSLFAERIRATIGSYIMQMGGLDALIFTGGIGENSARARAAICRNLHFLGLALDDEKNQRSATFIQADNALVKVAVINTNEELMIARDVMRLALPQARELAVSA.

This sequence belongs to the acetokinase family. PduW subfamily.

Its subcellular location is the cytoplasm. The enzyme catalyses propanoate + ATP = propanoyl phosphate + ADP. It functions in the pathway polyol metabolism; 1,2-propanediol degradation. Functionally, works with phosphate acetyltransferase (pta) to capture exogenous propionate and regenerate propionyl-CoA during degradation of 1,2-propanediol (1,2-PD). The protein is Propionate kinase of Klebsiella pneumoniae subsp. pneumoniae (strain ATCC 700721 / MGH 78578).